The following is a 577-amino-acid chain: Arginine--tRNA ligase (577 aa).

The short motif at 122 to 132 (PNVAKEMHVGH) is the 'HIGH' region element.

The protein belongs to the class-I aminoacyl-tRNA synthetase family. Monomer.

It localises to the cytoplasm. The enzyme catalyses tRNA(Arg) + L-arginine + ATP = L-arginyl-tRNA(Arg) + AMP + diphosphate. This Citrobacter koseri (strain ATCC BAA-895 / CDC 4225-83 / SGSC4696) protein is Arginine--tRNA ligase.